A 1060-amino-acid polypeptide reads, in one-letter code: Positive regulator of purine utilization (1060 aa).

Over residues 1-15 the composition is skewed to polar residues; it reads MLNPSTSDIHTSPTA. Residues 1 to 48 form a disordered region; the sequence is MLNPSTSDIHTSPTAVGNGRKRPHPIADSGSAMPSDPSAQQLPHPANE. A DNA-binding region (zn(2)-C6 fungal-type) is located at residues 67–94; that stretch reads CNRCRQRKNRCDQRLPRCQACEKAGVRC. 5 disordered regions span residues 163–207, 251–282, 367–391, 811–862, and 877–969; these read EIAA…DAED, SVPG…TTRD, AEDQ…SRQY, VQTS…RFDM, and RQGS…PSGM. Basic and acidic residues-rich tracts occupy residues 170–182, 189–207, and 260–269; these read SNDK…KEKN, KASR…DAED, and GPSRPKERLP. Residues 272–282 show a composition bias toward polar residues; sequence ATGTEGSTTRD. Over residues 367–377 the composition is skewed to basic and acidic residues; the sequence is AEDQKEGRDHS. A compositionally biased stretch (polar residues) spans 811–831; sequence VQTSTSGSRQFNATQSRSRPY. 2 stretches are compositionally biased toward low complexity: residues 832–859 and 930–952; these read SRQQ…PLPR and PRYY…AASG.

The protein resides in the nucleus. Its function is as follows. Mediates the induction of a number of unlinked genes involved in purine utilization. Binds to the consensus sequence 5'-TCGGNNNNNNCCGA-3'. The sequence is that of Positive regulator of purine utilization (uaY) from Emericella nidulans (strain FGSC A4 / ATCC 38163 / CBS 112.46 / NRRL 194 / M139) (Aspergillus nidulans).